The primary structure comprises 389 residues: MGQNLSTSNPLGFFPEHQLDPAFKANTNNPDWDFNPKKDYWPEATKVGAGAFGPGFTPPHGGLLGLSPQAQGILTTLPANPPPASTNRQSGRQPTPLSPPLRDTHPQAMQWNSTTFHQALQDPRVRGLYFPAGGSSSGTLNPVPNTASHISSVFSTTGDPAPNMENITSGFLGPLLVLQAGFFLLTKILTIPQSLDSWWTSLNFLGGAPVCLGQNSQSPTSNHSPTSCPPICPGYRWMCLRRFIIFLFILLLCLIFLLVLLDYQGMLPVCPLIPGSSTTSTGPCKTCTTPAQGTSLIPSCCCTKPSDGNCTCIPIPSSWAFAKFLWEWASVRFSWLSLLAPFVQWFAGLSPTVWLLAIWMMWYWGPNLYNILSPFIPLLPIFFCLWVYI.

Position 1 is an N-acetylmethionine (Met1). Residue Gly2 is the site of N-myristoyl glycine; by host attachment. The interval 2 to 108 is pre-S1; it reads GQNLSTSNPL…PPLRDTHPQA (107 aa). Positions 2–163 are pre-S; the sequence is GQNLSTSNPL…FSTTGDPAPN (162 aa). The Virion surface; in external conformation segment spans residues 2–170; sequence GQNLSTSNPL…APNMENITSG (169 aa). Topologically, residues 2–242 are intravirion; in internal conformation; that stretch reads GQNLSTSNPL…PGYRWMCLRR (241 aa). The disordered stretch occupies residues 75–107; that stretch reads TTLPANPPPASTNRQSGRQPTPLSPPLRDTHPQ. Over residues 85 to 95 the composition is skewed to polar residues; the sequence is STNRQSGRQPT. The pre-S2 stretch occupies residues 109 to 163; it reads MQWNSTTFHQALQDPRVRGLYFPAGGSSSGTLNPVPNTASHISSVFSTTGDPAPN. The chain crosses the membrane as a helical span at residues 171-191; it reads FLGPLLVLQAGFFLLTKILTI. The Intravirion; in external conformation segment spans residues 192-242; it reads PQSLDSWWTSLNFLGGAPVCLGQNSQSPTSNHSPTSCPPICPGYRWMCLRR. A helical transmembrane segment spans residues 243–263; the sequence is FIIFLFILLLCLIFLLVLLDY. At 264 to 337 the chain is on the virion surface side; it reads QGMLPVCPLI…WASVRFSWLS (74 aa). An N-linked (GlcNAc...) asparagine; by host glycan is attached at Asn309. A helical transmembrane segment spans residues 338–358; that stretch reads LLAPFVQWFAGLSPTVWLLAI. Residues 359–364 lie on the Intravirion side of the membrane; it reads WMMWYW. Residues 365 to 387 form a helical membrane-spanning segment; that stretch reads GPNLYNILSPFIPLLPIFFCLWV. Over 388-389 the chain is Virion surface; sequence YI.

This sequence belongs to the orthohepadnavirus major surface antigen family. As to quaternary structure, in its internal form (Li-HBsAg), interacts with the capsid protein and with the isoform S. Interacts with host chaperone CANX. Associates with host chaperone CANX through its pre-S2 N glycan; this association may be essential for isoform M proper secretion. In terms of assembly, interacts with isoform L. Interacts with the antigens of satellite virus HDV (HDVAgs); this interaction is required for encapsidation of HDV genomic RNA. Post-translationally, isoform M is N-terminally acetylated by host at a ratio of 90%, and N-glycosylated by host at the pre-S2 region. Myristoylated.

Its subcellular location is the virion membrane. In terms of biological role, the large envelope protein exists in two topological conformations, one which is termed 'external' or Le-HBsAg and the other 'internal' or Li-HBsAg. In its external conformation the protein attaches the virus to cell receptors and thereby initiating infection. This interaction determines the species specificity and liver tropism. This attachment induces virion internalization predominantly through caveolin-mediated endocytosis. The large envelope protein also assures fusion between virion membrane and endosomal membrane. In its internal conformation the protein plays a role in virion morphogenesis and mediates the contact with the nucleocapsid like a matrix protein. Functionally, the middle envelope protein plays an important role in the budding of the virion. It is involved in the induction of budding in a nucleocapsid independent way. In this process the majority of envelope proteins bud to form subviral lipoprotein particles of 22 nm of diameter that do not contain a nucleocapsid. In Pan troglodytes (Chimpanzee), this protein is Large envelope protein.